The primary structure comprises 247 residues: Carboxy-S-adenosyl-L-methionine synthase (247 aa).

S-adenosyl-L-methionine-binding positions include Tyr40, 65–67 (GAS), 90–91 (DN), 122–123 (DI), Asn137, and Arg204.

This sequence belongs to the class I-like SAM-binding methyltransferase superfamily. Cx-SAM synthase family. As to quaternary structure, homodimer.

It carries out the reaction prephenate + S-adenosyl-L-methionine = carboxy-S-adenosyl-L-methionine + 3-phenylpyruvate + H2O. Functionally, catalyzes the conversion of S-adenosyl-L-methionine (SAM) to carboxy-S-adenosyl-L-methionine (Cx-SAM). The sequence is that of Carboxy-S-adenosyl-L-methionine synthase from Ectopseudomonas mendocina (strain ymp) (Pseudomonas mendocina).